A 279-amino-acid chain; its full sequence is MKIAYLGPRGSFCSVVAEAAFKSEELYSYATILDVIEAYNEGECDFALVPIENSTEGTVNMSIDKIFHDSNAKVVAEFVLPISQNLLAVSKEQKIEHIYSHPQALAQTRVYLRKFYPQAQVEITESTSAAAEFVKNNPDLPAAAVANSFAAKMYDLEFIAENIQDLAGNSTRFWLLGKEKQSFDLNQTKDKVTLALTLPDNLPGALHKAISVFAWRDIDMTKIESRPLRTRLGQYFFIIDLENNATNSLKIPYALEELAGLGVNVRLLGNYSVYSLGEV.

In terms of domain architecture, Prephenate dehydratase spans 2 to 178 (KIAYLGPRGS…NSTRFWLLGK (177 aa)). The 79-residue stretch at 194–272 (LALTLPDNLP…VNVRLLGNYS (79 aa)) folds into the ACT domain.

It carries out the reaction prephenate + H(+) = 3-phenylpyruvate + CO2 + H2O. The protein operates within amino-acid biosynthesis; L-phenylalanine biosynthesis; phenylpyruvate from prephenate: step 1/1. This Lactococcus lactis subsp. cremoris (strain MG1363) protein is Prephenate dehydratase (pheA).